A 136-amino-acid polypeptide reads, in one-letter code: MTKLTFGALVALAMTAAASTAMSSKAMAQDAAAGKTSFNKCLACHAIGEGAKNKVGPELNGLNGRKSGTAPDYSYSDANKNSGITWDEATFKEYIKDPKAKIPGTKMAFAGIKNETEINNLWTFVSQFDKDGKIKQ.

The N-terminal stretch at 1–28 (MTKLTFGALVALAMTAAASTAMSSKAMA) is a signal peptide. Heme c-binding residues include cysteine 41, cysteine 44, histidine 45, and methionine 107.

Binds 1 heme c group covalently per subunit. Post-translationally, the N-terminus is blocked.

It localises to the periplasm. Functionally, plays a role in bacteroid respiration under conditions of oxygen limitation. Required for electron-transfer during denitrification. In Bradyrhizobium diazoefficiens (strain JCM 10833 / BCRC 13528 / IAM 13628 / NBRC 14792 / USDA 110), this protein is Cytochrome c-550 (cycA).